The chain runs to 309 residues: MQLLLALLALAYVAPSTEDSHWCYEIQAKEPNSHCSGPEQWTGDCKKNQQSPINIVTSKTKLNPSLTPFTFVGYDQKKKWEVKNNQHSVEMSLGEDIYIFGGDLPTQYKAIQLHLHWSEESNKGSEHSIDGKHFAMEMHVVHKKMTTGDKVQDSDSKDKIAVLAFMVEVGNEVNEGFQPLVEALSRLSKPFTNSTVSESCLQDMLPEKKKLSAYFRYQGSLTTPGCDETVIWTVFEEPIKIHKDQFLEFSKKLYYDQEQKLNMKDNVRPLQPLGNRQVFRSHASGRLLSLPLPTLLVPTLTCLVASFLH.

The first 17 residues, M1–T17, serve as a signal peptide directing secretion. The Alpha-carbonic anhydrase domain occupies S20 to H282. Cystine bridges form between C23-C35 and C45-C226. The active-site Proton donor/acceptor is H87. H114, H116, and H139 together coordinate Zn(2+). N-linked (GlcNAc...) asparagine glycosylation occurs at N193. T222–T223 provides a ligand contact to substrate. The GPI-anchor amidated serine moiety is linked to residue S281. The propeptide at H282–H309 is removed in mature form.

The protein belongs to the alpha-carbonic anhydrase family. In terms of assembly, interacts with SLC4A4. Zn(2+) is required as a cofactor. Post-translationally, the N-terminus is blocked. Glycosylated. Present in kidney and lung. Also particularly abundant in brain, muscle, heart and liver. Not detected in skin or spleen.

The protein resides in the cell membrane. It carries out the reaction hydrogencarbonate + H(+) = CO2 + H2O. Its activity is regulated as follows. Inhibited by acetazolamide. Catalyzes the reversible hydration of carbon dioxide into bicarbonate and protons and thus is essential to maintaining intracellular and extracellular pH. May stimulate the sodium/bicarbonate transporter activity of SLC4A4 that acts in pH homeostasis. It is essential for acid overload removal from the retina and retina epithelium, and acid release in the choriocapillaris in the choroid. In Rattus norvegicus (Rat), this protein is Carbonic anhydrase 4 (Ca4).